The primary structure comprises 597 residues: Protein unc-93 homolog B1 (597 aa).

The tract at residues 1-29 (MEAEPPLYPMAGAAGPQGDEDLLGVPDGP) is disordered. Helical transmembrane passes span 64 to 84 (VLAASAGGMLTYGVYLGLLQM), 110 to 130 (KMLMGINVTPIAALLYTPVLI), 132 to 152 (FFGTKWMMFLAVGIYALFVST), 160 to 180 (TLVPSAVALGMAIVPLWASMG), and 223 to 243 (IFYSFFHLSFACAQLPMIYFL). N-linked (GlcNAc...) asparagine glycosylation is found at Asn-251 and Asn-272. The next 5 membrane-spanning stretches (helical) occupy residues 285–305 (LIVVESVLMAVAFLAMLLVLG), 343–363 (LVPFFIYSGFEVLFACTGIAL), 378–398 (LLVAYSLGASAASLLGLLGLW), 403–423 (VPLVAGAGVHLLLTFILFFWA), and 428–448 (VLQHSWILYVAAALWGVGSAL). Asn-449 carries N-linked (GlcNAc...) asparagine glycosylation. Helical transmembrane passes span 469–489 (FIFTIYHWWQAVAIFTVYLGS) and 491–511 (LHMKAKLAVLLVTLVAAAVSY). The segment at 522–597 (VAPRQPRIPR…AQGGDGPEEQ (76 aa)) is disordered. Residues Ser-547 and Ser-550 each carry the phosphoserine modification.

Belongs to the unc-93 family. Interacts with TLR3, TLR5, TLR7, and TLR9 (probably via transmembrane domain). Post-translationally, N-glycosylated. As to expression, expressed in plasmocytoid dendritic cells (at protein level). Highly expressed in antigen-presenting cells. Expressed in heart, and at lower level in kidney. Expressed at low level in other tissues.

It is found in the endoplasmic reticulum membrane. The protein resides in the endosome. It localises to the lysosome. The protein localises to the cytoplasmic vesicle. Its subcellular location is the phagosome. Plays an important role in innate and adaptive immunity by regulating nucleotide-sensing Toll-like receptor (TLR) signaling. Required for the transport of a subset of TLRs (including TLR3, TLR7 and TLR9) from the endoplasmic reticulum to endolysosomes where they can engage pathogen nucleotides and activate signaling cascades. May play a role in autoreactive B-cells removal. This is Protein unc-93 homolog B1 from Homo sapiens (Human).